The chain runs to 578 residues: Proline--tRNA ligase (578 aa).

It belongs to the class-II aminoacyl-tRNA synthetase family. ProS type 1 subfamily. As to quaternary structure, homodimer.

It localises to the cytoplasm. It carries out the reaction tRNA(Pro) + L-proline + ATP = L-prolyl-tRNA(Pro) + AMP + diphosphate. Functionally, catalyzes the attachment of proline to tRNA(Pro) in a two-step reaction: proline is first activated by ATP to form Pro-AMP and then transferred to the acceptor end of tRNA(Pro). As ProRS can inadvertently accommodate and process non-cognate amino acids such as alanine and cysteine, to avoid such errors it has two additional distinct editing activities against alanine. One activity is designated as 'pretransfer' editing and involves the tRNA(Pro)-independent hydrolysis of activated Ala-AMP. The other activity is designated 'posttransfer' editing and involves deacylation of mischarged Ala-tRNA(Pro). The misacylated Cys-tRNA(Pro) is not edited by ProRS. This is Proline--tRNA ligase from Burkholderia cenocepacia (strain HI2424).